Here is a 364-residue protein sequence, read N- to C-terminus: MRLLGIETSCDETATAVIEHTIGGNSQILSNIVWSQTDHHAPYGGVVPEIAARAHVEILDELILKALRDAHTKLKDIDAIAVTNGPGLIGGLLVGVMSAKALSLATGKPFIGVNHLEGHALTAVLTHNVHFPYLLLLVSGGHTQTILVHGVGNYQRLGTTIDDALGEAFDKTAKLLGLPYPGGPAIEKAALLGNKNRIPLPRPLKGEKRLDFSFSGLKTAVRQAATAISPLTESDVADIAASFQAAVTDTVYDRVYLALQHFTQQYPLSRHQGPRPPALVVAGGVAANQAIRLTLQELADQQGFEFIAPPLSLCTDNAAMIAFAGAQRLARGEKSSLDIAPRSRWPLDEKSAPLIGTGRRGTKA.

Fe cation is bound by residues His-115 and His-119. Substrate is bound by residues 137–141, Asp-170, Gly-183, and Asn-288; that span reads LVSGG. Asp-316 provides a ligand contact to Fe cation. Residues 341-364 are disordered; the sequence is PRSRWPLDEKSAPLIGTGRRGTKA.

The protein belongs to the KAE1 / TsaD family. Requires Fe(2+) as cofactor.

The protein resides in the cytoplasm. It carries out the reaction L-threonylcarbamoyladenylate + adenosine(37) in tRNA = N(6)-L-threonylcarbamoyladenosine(37) in tRNA + AMP + H(+). In terms of biological role, required for the formation of a threonylcarbamoyl group on adenosine at position 37 (t(6)A37) in tRNAs that read codons beginning with adenine. Is involved in the transfer of the threonylcarbamoyl moiety of threonylcarbamoyl-AMP (TC-AMP) to the N6 group of A37, together with TsaE and TsaB. TsaD likely plays a direct catalytic role in this reaction. The protein is tRNA N6-adenosine threonylcarbamoyltransferase of Bartonella henselae (strain ATCC 49882 / DSM 28221 / CCUG 30454 / Houston 1) (Rochalimaea henselae).